The chain runs to 130 residues: Small ribosomal subunit protein uS11c (130 aa).

The protein belongs to the universal ribosomal protein uS11 family. As to quaternary structure, part of the 30S ribosomal subunit.

It is found in the plastid. The protein localises to the chloroplast. The sequence is that of Small ribosomal subunit protein uS11c from Drimys granadensis.